A 133-amino-acid polypeptide reads, in one-letter code: Ribosome-binding factor A (133 aa).

Belongs to the RbfA family. As to quaternary structure, monomer. Binds 30S ribosomal subunits, but not 50S ribosomal subunits or 70S ribosomes.

The protein localises to the cytoplasm. Functionally, one of several proteins that assist in the late maturation steps of the functional core of the 30S ribosomal subunit. Associates with free 30S ribosomal subunits (but not with 30S subunits that are part of 70S ribosomes or polysomes). Required for efficient processing of 16S rRNA. May interact with the 5'-terminal helix region of 16S rRNA. This Yersinia enterocolitica protein is Ribosome-binding factor A.